Here is a 303-residue protein sequence, read N- to C-terminus: HTH-type transcriptional regulator LinR (303 aa).

The HTH lysR-type domain maps to 6 to 63 (LDFRHLVLLDALLKRHSVSAAARELDLPQPTASHGLARLRKALGDPLLVRARDGMEPT). The segment at residues 23–42 (VSAAARELDLPQPTASHGLA) is a DNA-binding region (H-T-H motif).

The protein belongs to the LysR transcriptional regulatory family.

Functionally, positively regulates the transcription of the linD and linE genes that are involved in gamma-hexachlorocyclohexane (gamma-HCH or lindane) degradation. This degradation pathway allows S.japonicum UT26 to grow on gamma-HCH as the sole source of carbon and energy. This Sphingobium indicum (strain DSM 16413 / CCM 7287 / MTCC 6362 / UT26 / NBRC 101211 / UT26S) (Sphingobium japonicum) protein is HTH-type transcriptional regulator LinR (linR).